The following is a 1045-amino-acid chain: Endoglucanase B (1045 aa).

The signal sequence occupies residues 1 to 33 (MLRQVPRTLVAGGSALAVAVGVLVAPLATGAAA). Residues 34-492 (APTYNYAEAL…LASFPTPEQP (459 aa)) are catalytic. The active-site Nucleophile is the Asp-91. Residues His-410, Asp-449, and Glu-458 contribute to the active site. In terms of domain architecture, CBM3 spans 493 to 642 (DGDQLFVEAM…STLVWGKEPT (150 aa)). 4 linker ('hinge') (Pro-Thr box) regions span residues 644 to 650 (TTTDTTP), 734 to 748 (AAVT…ETEP), 831 to 846 (APVT…DTVA), and 931 to 944 (SPVT…TSTP). 3 Fibronectin type-III domains span residues 653 to 743 (TPGT…TDTT), 751 to 840 (TPGT…TAAP), and 849 to 940 (VPGT…TLPV). The 107-residue stretch at 939–1045 (PVTSTPSCTV…SFTVNGEVCG (107 aa)) folds into the CBM2 domain. Cys-946 and Cys-1044 are disulfide-bonded.

It belongs to the glycosyl hydrolase 9 (cellulase E) family.

It carries out the reaction Endohydrolysis of (1-&gt;4)-beta-D-glucosidic linkages in cellulose, lichenin and cereal beta-D-glucans.. In terms of biological role, the biological conversion of cellulose to glucose generally requires three types of hydrolytic enzymes: (1) Endoglucanases which cut internal beta-1,4-glucosidic bonds; (2) Exocellobiohydrolases that cut the disaccharide cellobiose from the non-reducing end of the cellulose polymer chain; (3) Beta-1,4-glucosidases which hydrolyze the cellobiose and other short cello-oligosaccharides to glucose. The polypeptide is Endoglucanase B (cenB) (Cellulomonas fimi).